Here is a 128-residue protein sequence, read N- to C-terminus: Gastrotropin (128 aa).

Residue A2 is modified to N-acetylalanine.

It belongs to the calycin superfamily. Fatty-acid binding protein (FABP) family. Expressed in ileum.

Its subcellular location is the cytoplasm. It localises to the membrane. In terms of biological role, binds to bile acids and is involved in enterohepatic bile acid metabolism. Required for efficient apical to basolateral transport of conjugated bile acids in ileal enterocytes. Stimulates gastric acid and pepsinogen secretion. This is Gastrotropin (FABP6) from Oryctolagus cuniculus (Rabbit).